Consider the following 801-residue polypeptide: Bromodomain-containing protein 2 (801 aa).

Methionine 1 is subject to N-acetylmethionine. Residue threonine 6 is modified to Phosphothreonine. Serine 37 bears the Phosphoserine mark. Residues 53-73 (ALQLTPANPPPPEVSNPKKPG) form a disordered region. One can recognise a Bromo 1 domain in the interval 74 to 180 (RVTNQLQYLH…KIFLQKVASM (107 aa)). The a protein site is built by aspartate 112, tyrosine 155, asparagine 156, lysine 157, aspartate 160, and aspartate 161. Disordered regions lie at residues 268-349 (PPAQ…LSEQ), 456-647 (EPLE…YDEK), and 737-801 (EKRL…SDSG). Residues 285–298 (TTTPTPTAILAPGS) show a composition bias toward low complexity. 3 positions are modified to phosphoserine: serine 298, serine 301, and serine 305. Residues 316-332 (MRRESGRPIKPPRKDLP) show a composition bias toward basic and acidic residues. The Bromo 2 domain occupies 344 to 453 (GKLSEQLKHC…DVFEFRYAKM (110 aa)). Acidic residues predominate over residues 481–514 (SSEESSSESSSEEEEEEDEEDEEEEESESSDSEE). Over residues 544-566 (KPKRKREKKEKKKKRKAEKHRGR) the composition is skewed to basic residues. The short motif at 555–559 (KKKRK) is the Nuclear localization signal element. A compositionally biased stretch (gly residues) spans 592-612 (GSGGGSAALGPSGFGPSGGSG). Residues 632–714 (DSEEEEESRP…SCLRKKPRKP (83 aa)) enclose the NET domain. Residue serine 633 is modified to Phosphoserine. The segment covering 763 to 795 (SSSAQQVAVSRLSASSSSSDSSSSSSSSSSSDT) has biased composition (low complexity).

It belongs to the BET family. In terms of assembly, homodimer. Interacts with E2F1. Interacts with (acetylated) STAT3; promoting STAT3 recruitment to chromatin. Interacts with CTCF; promoting BRD2 recruitment to chromatin. (Microbial infection) Interacts with herpes virus 8 protein LANA1.

Its subcellular location is the nucleus. It is found in the chromosome. Its activity is regulated as follows. Inhibited by JQ1, a thieno-triazolo-1,4-diazepine derivative, which specifically inhibits members of the BET family (BRD2, BRD3 and BRD4). The first bromo domain is inhibited by GSK778 (iBET-BD1), which specifically inhibits the first bromo domain of members of the BET family (BRD2, BRD3 and BRD4). The second bromo domain is inhibited by ABBV-744, which specifically inhibits the second bromo domain of members of the BET family (BRD2, BRD3 and BRD4). The second bromo domain is inhibited by GSK046 (iBET-BD2), which specifically inhibits the second bromo domain of members of the BET family (BRD2, BRD3 and BRD4). Its function is as follows. Chromatin reader protein that specifically recognizes and binds histone H4 acetylated at 'Lys-5' and 'Lys-12' (H4K5ac and H4K12ac, respectively), thereby controlling gene expression and remodeling chromatin structures. Recruits transcription factors and coactivators to target gene sites, and activates RNA polymerase II machinery for transcriptional elongation. Plays a key role in genome compartmentalization via its association with CTCF and cohesin: recruited to chromatin by CTCF and promotes formation of topologically associating domains (TADs) via its ability to bind acetylated histones, contributing to CTCF boundary formation and enhancer insulation. Also recognizes and binds acetylated non-histone proteins, such as STAT3. Involved in inflammatory response by regulating differentiation of naive CD4(+) T-cells into T-helper Th17: recognizes and binds STAT3 acetylated at 'Lys-87', promoting STAT3 recruitment to chromatin. In addition to acetylated lysines, also recognizes and binds lysine residues on histones that are both methylated and acetylated on the same side chain to form N6-acetyl-N6-methyllysine (Kacme), an epigenetic mark of active chromatin associated with increased transcriptional initiation. Specifically binds histone H4 acetyl-methylated at 'Lys-5' and 'Lys-12' (H4K5acme and H4K12acme, respectively). This is Bromodomain-containing protein 2 from Homo sapiens (Human).